The chain runs to 454 residues: Glutamyl-tRNA reductase (454 aa).

Substrate-binding positions include 49-52, Ser109, 114-116, and Gln120; these read TCNR and ETQ. The Nucleophile role is filled by Cys50. Residue 189 to 194 coordinates NADP(+); sequence GAGKMS. Residues 432 to 442 show a composition bias toward basic and acidic residues; it reads DHAEQSWKEGQ. Residues 432 to 454 are disordered; sequence DHAEQSWKEGQRPSLNQGMALRT.

Belongs to the glutamyl-tRNA reductase family. Homodimer.

It carries out the reaction (S)-4-amino-5-oxopentanoate + tRNA(Glu) + NADP(+) = L-glutamyl-tRNA(Glu) + NADPH + H(+). It functions in the pathway porphyrin-containing compound metabolism; protoporphyrin-IX biosynthesis; 5-aminolevulinate from L-glutamyl-tRNA(Glu): step 1/2. Functionally, catalyzes the NADPH-dependent reduction of glutamyl-tRNA(Glu) to glutamate 1-semialdehyde (GSA). In Shouchella clausii (strain KSM-K16) (Alkalihalobacillus clausii), this protein is Glutamyl-tRNA reductase.